The following is a 264-amino-acid chain: Thymidylate synthase (264 aa).

Arg-21 contacts dUMP. Residue His-51 coordinates (6R)-5,10-methylene-5,6,7,8-tetrahydrofolate. Residue 126 to 127 (RR) participates in dUMP binding. Cys-146 serves as the catalytic Nucleophile. DUMP is bound by residues 166-169 (RSCD), Asn-177, and 207-209 (HLY). Position 169 (Asp-169) interacts with (6R)-5,10-methylene-5,6,7,8-tetrahydrofolate. (6R)-5,10-methylene-5,6,7,8-tetrahydrofolate is bound at residue Ala-263.

The protein belongs to the thymidylate synthase family. Bacterial-type ThyA subfamily. In terms of assembly, homodimer.

Its subcellular location is the cytoplasm. The catalysed reaction is dUMP + (6R)-5,10-methylene-5,6,7,8-tetrahydrofolate = 7,8-dihydrofolate + dTMP. It participates in pyrimidine metabolism; dTTP biosynthesis. Functionally, catalyzes the reductive methylation of 2'-deoxyuridine-5'-monophosphate (dUMP) to 2'-deoxythymidine-5'-monophosphate (dTMP) while utilizing 5,10-methylenetetrahydrofolate (mTHF) as the methyl donor and reductant in the reaction, yielding dihydrofolate (DHF) as a by-product. This enzymatic reaction provides an intracellular de novo source of dTMP, an essential precursor for DNA biosynthesis. The protein is Thymidylate synthase of Escherichia fergusonii (strain ATCC 35469 / DSM 13698 / CCUG 18766 / IAM 14443 / JCM 21226 / LMG 7866 / NBRC 102419 / NCTC 12128 / CDC 0568-73).